The primary structure comprises 472 residues: Homeobox protein PKNOX2 (472 aa).

The disordered stretch occupies residues 1–62 (MMQHASPAPA…STPVPSAPID (62 aa)). Residues 26-38 (DSPQMTATTQPPS) show a composition bias toward polar residues. Low complexity predominate over residues 46 to 56 (SAPSAAASTPV). The region spanning 96–179 (GSECITSASF…MHSDNLLRND (84 aa)) is the MEIS N-terminal domain. Positions 291–350 (KRGVLPKHATNIMRSWLFQHLMHPYPTEDEKRQIAAQTNLTLLQVNNWFVNARRRILQPM) form a DNA-binding region, homeobox. Disordered regions lie at residues 351–371 (LDAS…QHRP), 386–405 (QQQG…LDNL), and 423–472 (AAHD…DSLV). A compositionally biased stretch (basic residues) spans 361–371 (KAKKIKSQHRP). Positions 396–405 (PDGSINLDNL) are enriched in polar residues. The span at 429 to 454 (LDGTEEEDEDEMEEEEEEELEEEVDE) shows a compositional bias: acidic residues.

The protein belongs to the TALE/MEIS homeobox family.

Its subcellular location is the nucleus. The chain is Homeobox protein PKNOX2 (PKNOX2) from Pongo abelii (Sumatran orangutan).